The primary structure comprises 109 residues: Putative transposase MJ0856.1 (109 aa).

Residues Cys-36, Cys-39, Cys-62, and Cys-65 each coordinate Zn(2+).

Belongs to the transposase 35 family.

The chain is Putative transposase MJ0856.1 from Methanocaldococcus jannaschii (strain ATCC 43067 / DSM 2661 / JAL-1 / JCM 10045 / NBRC 100440) (Methanococcus jannaschii).